A 428-amino-acid polypeptide reads, in one-letter code: Adenylosuccinate synthetase (428 aa).

GTP is bound by residues 12–18 (GDEGKGK) and 40–42 (GHT). The Proton acceptor role is filled by aspartate 13. 2 residues coordinate Mg(2+): aspartate 13 and glycine 40. IMP is bound by residues 13 to 16 (DEGK), 38 to 41 (NAGH), threonine 128, arginine 142, glutamine 223, threonine 238, and arginine 302. Catalysis depends on histidine 41, which acts as the Proton donor. 298 to 304 (TTTGRPR) contacts substrate. GTP is bound by residues arginine 304, 330–332 (KLD), and 412–414 (SVG).

This sequence belongs to the adenylosuccinate synthetase family. Homodimer. Mg(2+) serves as cofactor.

It localises to the cytoplasm. The catalysed reaction is IMP + L-aspartate + GTP = N(6)-(1,2-dicarboxyethyl)-AMP + GDP + phosphate + 2 H(+). It participates in purine metabolism; AMP biosynthesis via de novo pathway; AMP from IMP: step 1/2. Its function is as follows. Plays an important role in the de novo pathway of purine nucleotide biosynthesis. Catalyzes the first committed step in the biosynthesis of AMP from IMP. The chain is Adenylosuccinate synthetase from Desulforamulus reducens (strain ATCC BAA-1160 / DSM 100696 / MI-1) (Desulfotomaculum reducens).